Consider the following 149-residue polypeptide: Transcriptional repressor NrdR (149 aa).

The segment at 3–34 (CPFCSAVDTKVIDSRLVAEGHQVRRRRECLLC) is a zinc-finger region. The ATP-cone domain occupies 49 to 139 (PRVIKSNGSR…VYRSFEDIRE (91 aa)).

The protein belongs to the NrdR family. Zn(2+) is required as a cofactor.

Negatively regulates transcription of bacterial ribonucleotide reductase nrd genes and operons by binding to NrdR-boxes. The sequence is that of Transcriptional repressor NrdR from Aeromonas salmonicida (strain A449).